We begin with the raw amino-acid sequence, 196 residues long: Protein Flattop (196 aa).

Residues 107-196 form a disordered region; it reads NGLRPEIFGK…PHAGRNLAEV (90 aa). Residues 113 to 124 are compositionally biased toward basic and acidic residues; sequence IFGKPHDPDSQK. Residues 137–149 are compositionally biased toward low complexity; the sequence is APSPTIIPSSPAS. The span at 150 to 162 shows a compositional bias: polar residues; sequence NLSSPDQLQSSHP.

It belongs to the Flattop family. In terms of assembly, microtubule inner protein component of sperm flagellar doublet microtubules. Interacts with DLG3. In terms of tissue distribution, expressed in trachea multiciliated cells.

The protein resides in the cytoplasm. It is found in the cytoskeleton. The protein localises to the cilium basal body. It localises to the cell projection. Its subcellular location is the cilium. The protein resides in the apical cell membrane. It is found in the cilium axoneme. The protein localises to the flagellum axoneme. Microtubule inner protein (MIP) part of the dynein-decorated doublet microtubules (DMTs) in cilia axoneme. Acts as a regulator of cilium basal body docking and positioning in mono- and multiciliated cells. Regulates basal body docking and cilia formation in multiciliated lung cells. Regulates kinocilium positioning and stereocilia bundle morphogenesis in the inner ear. The chain is Protein Flattop from Bos taurus (Bovine).